Reading from the N-terminus, the 439-residue chain is Histidine--tRNA ligase (439 aa).

It belongs to the class-II aminoacyl-tRNA synthetase family. Homodimer.

The protein localises to the cytoplasm. The enzyme catalyses tRNA(His) + L-histidine + ATP = L-histidyl-tRNA(His) + AMP + diphosphate + H(+). In Leptospira borgpetersenii serovar Hardjo-bovis (strain L550), this protein is Histidine--tRNA ligase.